Consider the following 645-residue polypeptide: MSDTKVYPVPDYIREKAHITKDTYEEMYRRSLDDPEGFWGEQAEKFLDWFSKWDKVYHSDLKNGEIRFFEGGKLNVAHNCLDRHLEQRGDQTAIIWEGDDPNNSEHITYKDLHERVCRLANAMKARGVKKGDRVCIYLPMIPEAAVAMLACARIGAIHSIVFGGFSPDALKDRIQNADCETVITADEGVRGGRNVALKSNADKALESCPDVKNVFVVKRTGGDIDWKEGRDIWYHEAVADVSADCPAEELDAEDPLFILYTSGSTGKPKGVQHCSAGYLLGAAMTHKYVFDYQEGEVYWCTADVGWVTGHSYIVYGPLANGATTLMFEGVPTYPSAARCWEVVDKHNVSIFYTAPTAIRALMGQGNEHVTKTSRKSLRILGTVGEPINPEAWEWYYNVVGDGRCPIVDTWWQTETGSILIAPLPGATDLKPGSATLPFFGVEPALVDPEGKELEGAASGNLVIKRAWPSMMRTVYGDHKRFMETYLAAYPGMYFTGDGARRDEDGYYWITGRVDDVINVSGHRMGTAEVESALVLHDAVAEAAVVGYPHDIKGQGIYAYVTLMAGVEPSDELKKELVKLVSNEIGPIAKPDVIQWAPGLPKTRSGKIMRRILRKVAANELDSLGDTSTLADPTVVDNLIEDRPNK.

CoA contacts are provided by residues 190-193 (RGGR) and Thr308. ATP contacts are provided by residues 384–386 (GEP), 408–413 (DTWWQT), Asp497, and Arg512. Ser520 contributes to the CoA binding site. Arg523 serves as a coordination point for ATP. 3 residues coordinate Mg(2+): Val534, His536, and Val539. Position 606 is an N6-acetyllysine (Lys606).

The protein belongs to the ATP-dependent AMP-binding enzyme family. Requires Mg(2+) as cofactor. Post-translationally, acetylated. Deacetylation by the SIR2-homolog deacetylase activates the enzyme.

It catalyses the reaction acetate + ATP + CoA = acetyl-CoA + AMP + diphosphate. Catalyzes the conversion of acetate into acetyl-CoA (AcCoA), an essential intermediate at the junction of anabolic and catabolic pathways. AcsA undergoes a two-step reaction. In the first half reaction, AcsA combines acetate with ATP to form acetyl-adenylate (AcAMP) intermediate. In the second half reaction, it can then transfer the acetyl group from AcAMP to the sulfhydryl group of CoA, forming the product AcCoA. The polypeptide is Acetyl-coenzyme A synthetase (Alkalilimnicola ehrlichii (strain ATCC BAA-1101 / DSM 17681 / MLHE-1)).